A 223-amino-acid chain; its full sequence is uncharacterized protein (223 aa).

One can recognise a Tyr recombinase domain in the interval 29–220 (KQTYKMFKED…AKEILKNIGD (192 aa)). Active-site residues include arginine 71, lysine 103, histidine 170, arginine 173, and histidine 196. Tyrosine 205 serves as the catalytic O-(3'-phospho-DNA)-tyrosine intermediate.

The protein belongs to the 'phage' integrase family.

This is an uncharacterized protein from Methanocaldococcus jannaschii (strain ATCC 43067 / DSM 2661 / JAL-1 / JCM 10045 / NBRC 100440) (Methanococcus jannaschii).